The following is a 361-amino-acid chain: Collagenase (361 aa).

It belongs to the peptidase U32 family. As to quaternary structure, homodimer. A metal cation serves as cofactor.

Activity somewhat enhanced by calcium ions, inhibited by zinc and Fe(3+) ions and by p-chloromercuribenzoic acid and EDTA. Activity is enhanced by salivary peptide cystatin and reduced by salivary peptide histatin. In terms of biological role, has collagenase activity. Active on soluble collagen, reconstituted type I collagen, heat denatured type I collagen and azocoll, but not gelatin or the synthetic bacterial collagenase substrate PZ-PLGPA. May play a role in virulence. This chain is Collagenase, found in Porphyromonas gingivalis (Bacteroides gingivalis).